Here is a 731-residue protein sequence, read N- to C-terminus: Putative beta-galactosidase (731 aa).

Positions 1–29 (MLCGKENNVMKMMLVYVFVLITLISCVYG) are cleaved as a signal peptide. Glu187 functions as the Proton donor in the catalytic mechanism. The Nucleophile role is filled by Glu257.

It belongs to the glycosyl hydrolase 35 family. Senescing flower petals.

The catalysed reaction is Hydrolysis of terminal non-reducing beta-D-galactose residues in beta-D-galactosides.. This chain is Putative beta-galactosidase (CARSR12), found in Dianthus caryophyllus (Carnation).